Consider the following 238-residue polypeptide: Ditrans,polycis-undecaprenyl-diphosphate synthase ((2E,6E)-farnesyl-diphosphate specific) (238 aa).

Aspartate 14 is an active-site residue. Residue aspartate 14 participates in Mg(2+) binding. Residues 15–18, tryptophan 19, arginine 27, histidine 31, and 59–61 each bind substrate; these read GNGR and SSE. Asparagine 62 functions as the Proton acceptor in the catalytic mechanism. Substrate contacts are provided by residues tryptophan 63, arginine 65, arginine 182, and 188 to 190; that span reads RIS. Glutamate 201 is a binding site for Mg(2+).

It belongs to the UPP synthase family. As to quaternary structure, homodimer. Requires Mg(2+) as cofactor.

It catalyses the reaction 8 isopentenyl diphosphate + (2E,6E)-farnesyl diphosphate = di-trans,octa-cis-undecaprenyl diphosphate + 8 diphosphate. Catalyzes the sequential condensation of isopentenyl diphosphate (IPP) with (2E,6E)-farnesyl diphosphate (E,E-FPP) to yield (2Z,6Z,10Z,14Z,18Z,22Z,26Z,30Z,34E,38E)-undecaprenyl diphosphate (di-trans,octa-cis-UPP). UPP is the precursor of glycosyl carrier lipid in the biosynthesis of bacterial cell wall polysaccharide components such as peptidoglycan and lipopolysaccharide. This chain is Ditrans,polycis-undecaprenyl-diphosphate synthase ((2E,6E)-farnesyl-diphosphate specific), found in Legionella pneumophila subsp. pneumophila (strain Philadelphia 1 / ATCC 33152 / DSM 7513).